Here is a 467-residue protein sequence, read N- to C-terminus: Cytochrome P450 85A3 (467 aa).

The helical transmembrane segment at 2 to 22 threads the bilayer; that stretch reads AIFLIIFVVFFGFCILSTPLF. C417 is a heme binding site.

This sequence belongs to the cytochrome P450 family. Requires heme as cofactor. As to expression, expressed in fruits.

The protein localises to the membrane. The enzyme catalyses 6-deoxocastasterone + reduced [NADPH--hemoprotein reductase] + O2 = 6alpha-hydroxycastasterone + oxidized [NADPH--hemoprotein reductase] + H2O + H(+). The catalysed reaction is 6alpha-hydroxycastasterone + reduced [NADPH--hemoprotein reductase] + O2 = castasterone + oxidized [NADPH--hemoprotein reductase] + 2 H2O + H(+). It catalyses the reaction castasterone + reduced [NADPH--hemoprotein reductase] + O2 = brassinolide + oxidized [NADPH--hemoprotein reductase] + H2O + H(+). It carries out the reaction 6-deoxocastasterone + 2 reduced [NADPH--hemoprotein reductase] + 2 O2 = castasterone + 2 oxidized [NADPH--hemoprotein reductase] + 3 H2O + 2 H(+). It participates in plant hormone biosynthesis; brassinosteroid biosynthesis. Functionally, catalyzes the C6-oxidation step in brassinosteroids biosynthesis. Converts 6-deoxocastasterone (6-deoxoCS) to castasterone (CS), and castasterone (CS) to brassinolide (BL). In Solanum lycopersicum (Tomato), this protein is Cytochrome P450 85A3.